The following is a 104-amino-acid chain: Large ribosomal subunit protein uL24 (104 aa).

Belongs to the universal ribosomal protein uL24 family. Part of the 50S ribosomal subunit.

Functionally, one of two assembly initiator proteins, it binds directly to the 5'-end of the 23S rRNA, where it nucleates assembly of the 50S subunit. One of the proteins that surrounds the polypeptide exit tunnel on the outside of the subunit. The chain is Large ribosomal subunit protein uL24 from Flavobacterium johnsoniae (strain ATCC 17061 / DSM 2064 / JCM 8514 / BCRC 14874 / CCUG 350202 / NBRC 14942 / NCIMB 11054 / UW101) (Cytophaga johnsonae).